Reading from the N-terminus, the 238-residue chain is Thiamine import ATP-binding protein ThiQ (238 aa).

The ABC transporter domain maps to 2 to 230 (LALDKVRYEY…HPHPELAQFV (229 aa)). Residue 32–39 (GPSGAGKS) participates in ATP binding.

This sequence belongs to the ABC transporter superfamily. Thiamine importer (TC 3.A.1.19.1) family. The complex is composed of two ATP-binding proteins (ThiQ), two transmembrane proteins (ThiP) and a solute-binding protein (ThiB).

Its subcellular location is the cell inner membrane. It catalyses the reaction thiamine(out) + ATP + H2O = thiamine(in) + ADP + phosphate + H(+). Part of the ABC transporter complex ThiBPQ involved in thiamine import. Responsible for energy coupling to the transport system. The protein is Thiamine import ATP-binding protein ThiQ of Vibrio cholerae serotype O1 (strain ATCC 39315 / El Tor Inaba N16961).